A 545-amino-acid polypeptide reads, in one-letter code: Capsular polysaccharide phosphotransferase SacB (545 aa).

The protein belongs to the stealth family.

Functionally, part of a capsular biosynthesis operon and has been suggested to be the polymerase that links individual UDP-N-acetyl-D-mannosamine monomers. In serotype A the capsule is composed of repeated units of (alpha 1-6)-linked N-acetyl-D-mannosamine-1-phosphate. Non-polar disruption of this open reading frame prevented capsule synthesis. This chain is Capsular polysaccharide phosphotransferase SacB (sacB), found in Neisseria meningitidis serogroup A.